The sequence spans 402 residues: Putative epoxide hydrolase AFT8 (402 aa).

Belongs to the peptidase S33 family.

It functions in the pathway mycotoxin biosynthesis. Functionally, putative epoxide hydrolase; part of the gene clusters that mediate the biosynthesis of the host-selective toxins (HSTs) AF-toxins responsible for Alternaria black spot of strawberry disease by the strawberry pathotype. AF-toxin I and III are valine derivatives of 2,3-dyhydroxy-isovaleric acid and 2-hydroxy-isovaleric acid respectively, while AF II is an isoleucine derivative of 2-hydroxy-valeric acid. These derivatives are bound to a 9,10-epoxy-8-hydroxy-9-methyl-decatrienoic acid (EDA) moiety. On cellular level, AF-toxins affect plasma membrane of susceptible cells and cause a sudden increase in loss of K(+) after a few minutes of toxin treatment. The aldo-keto reductase AFTS1 catalyzes the conversion of 2-keto-isovaleric acid (2-KIV) to 2-hydroxy-isovaleric acid (2-HIV) by reduction of its ketone to an alcohol. The acyl-CoA ligase AFT1, the hydrolase AFT2 and the enoyl-CoA hydratases AFT3 and AFT6, but also the polyketide synthase AFT9, the acyl-CoA dehydrogenase AFT10, the cytochrome P450 monooxygenase AFT11 and the oxidoreductase AFT12 are all involved in the biosynthesis of the AK-, AF- and ACT-toxin common EDA structural moiety. The exact function of each enzyme, and of additional enzymes identified within the AF-toxin clusters have still to be determined. The protein is Putative epoxide hydrolase AFT8 of Alternaria alternata (Alternaria rot fungus).